Here is a 567-residue protein sequence, read N- to C-terminus: Thiol:disulfide interchange protein DsbD (567 aa).

Residues 1–19 (MAQRIFTLILLLCSTSAFA) form the signal peptide. 2 disulfide bridges follow: Cys-122-Cys-128 and Cys-185-Cys-307. 8 helical membrane passes run 166–186 (LPFSALWALLIGIGIAFTPCV), 210–230 (LLLAFIYVQGMALTYTALGLV), 246–266 (YVLIGLAIVFTLLALSMFGLF), 299–319 (IAGLICSPCTTAPLSAILLYI), 326–346 (WLGGGTLYLYALGMGLPLMLV), 360–380 (WMAHVKTAFGFVILALPVFLL), 387–407 (AWGLRLWSLLGVAFFGWAFIT), and 418–438 (IVQIILLAAALISVRPLQDWA). One can recognise a Thioredoxin domain in the interval 435 to 567 (QDWAFGSPSA…FSAHLHDRQP (133 aa)). Cys-482 and Cys-485 form a disulfide bridge.

This sequence belongs to the thioredoxin family. DsbD subfamily.

The protein localises to the cell inner membrane. The catalysed reaction is [protein]-dithiol + NAD(+) = [protein]-disulfide + NADH + H(+). It carries out the reaction [protein]-dithiol + NADP(+) = [protein]-disulfide + NADPH + H(+). Its function is as follows. Required to facilitate the formation of correct disulfide bonds in some periplasmic proteins and for the assembly of the periplasmic c-type cytochromes. Acts by transferring electrons from cytoplasmic thioredoxin to the periplasm. This transfer involves a cascade of disulfide bond formation and reduction steps. The sequence is that of Thiol:disulfide interchange protein DsbD from Salmonella choleraesuis (strain SC-B67).